The primary structure comprises 75 residues: Small ribosomal subunit protein bS18 (75 aa).

The protein belongs to the bacterial ribosomal protein bS18 family. Part of the 30S ribosomal subunit. Forms a tight heterodimer with protein bS6.

Binds as a heterodimer with protein bS6 to the central domain of the 16S rRNA, where it helps stabilize the platform of the 30S subunit. This is Small ribosomal subunit protein bS18 (rbsR) from Rhodobacter capsulatus (strain ATCC BAA-309 / NBRC 16581 / SB1003).